The sequence spans 127 residues: Small ribosomal subunit protein uS13 (127 aa).

Positions 92–127 are disordered; the sequence is HRQGLPVRGQRTRTNARTRRGRRLTVAGKKKAPSKK. The span at 101–127 shows a compositional bias: basic residues; the sequence is QRTRTNARTRRGRRLTVAGKKKAPSKK.

This sequence belongs to the universal ribosomal protein uS13 family. Part of the 30S ribosomal subunit. Forms a loose heterodimer with protein S19. Forms two bridges to the 50S subunit in the 70S ribosome.

Located at the top of the head of the 30S subunit, it contacts several helices of the 16S rRNA. In the 70S ribosome it contacts the 23S rRNA (bridge B1a) and protein L5 of the 50S subunit (bridge B1b), connecting the 2 subunits; these bridges are implicated in subunit movement. Contacts the tRNAs in the A and P-sites. The chain is Small ribosomal subunit protein uS13 from Gloeothece citriformis (strain PCC 7424) (Cyanothece sp. (strain PCC 7424)).